We begin with the raw amino-acid sequence, 514 residues long: Probable transposase for insertion sequence element IS1353 (514 aa).

Residues 172 to 216 are a coiled coil; the sequence is KGDTSLEQRHEALLRELAELESQNQRLRMENAILEKASELIKKDM. Residues 346 to 510 enclose the Integrase catalytic domain; it reads HASAPNTKWL…SPIEYRHAVG (165 aa). Residues D357 and D417 each contribute to the Mg(2+) site.

It belongs to the transposase 8 family.

Its function is as follows. Probably involved in the transposition of insertion sequence IS1353. The polypeptide is Probable transposase for insertion sequence element IS1353 (Shigella flexneri).